We begin with the raw amino-acid sequence, 82 residues long: Small ribosomal subunit protein bS18 (82 aa).

A disordered region spans residues 1–25 (MKRNNMKRARMEQSRRPKKNPLKAE).

This sequence belongs to the bacterial ribosomal protein bS18 family. Part of the 30S ribosomal subunit. Forms a tight heterodimer with protein bS6.

Its function is as follows. Binds as a heterodimer with protein bS6 to the central domain of the 16S rRNA, where it helps stabilize the platform of the 30S subunit. This is Small ribosomal subunit protein bS18 from Corynebacterium urealyticum (strain ATCC 43042 / DSM 7109).